Reading from the N-terminus, the 487-residue chain is MSLPNSSCLLEDKMCEGNKTTMASPQLMPLVVVLSTISLVTVGLNLLVLYAVRSERKLHTVGNLYIVSLSVADLIVGAVVMPMNILYLLMSKWSLGRPLCLFWLSMDYVASTASIFSVFILCIDRYRSVQQPLRYLKYRTKTRASATILGAWFLSFLWVIPILGWNHFRQQISVRREDKCETDFYDVTWFKVMTAIINFYLPTLLMLWFYAKIYKAVQKHCQHRELINGSLPSFSEIKLRPENPKGDAKKPGKESPWEVLKRKPKDAGGGSVLKSPSQTPKEMKSPVVFSQEDDGEVDKLHCFPLDIVQMQTVAEGSSRDYVAINQSHGQLKTDEQGLNTHGASEISEDQMLGDSQSFSRTDSDTTTETAPGKGKLRSGSNTGLDYIKFTWKRLRSHSRQYVSGLHMNRERKAAKQLGFIMAAFILCWIPYFIFFMVIAFCKNCCNEHLHMFTIWLGYINSTLNPLIYPLCNENFKKTFKRILHIRS.

Over 1 to 29 (MSLPNSSCLLEDKMCEGNKTTMASPQLMP) the chain is Extracellular. N-linked (GlcNAc...) asparagine glycosylation is found at N5 and N18. A helical transmembrane segment spans residues 30–50 (LVVVLSTISLVTVGLNLLVLY). The Cytoplasmic segment spans residues 51–64 (AVRSERKLHTVGNL). The helical transmembrane segment at 65-89 (YIVSLSVADLIVGAVVMPMNILYLL) threads the bilayer. Over 90 to 97 (MSKWSLGR) the chain is Extracellular. A helical membrane pass occupies residues 98–123 (PLCLFWLSMDYVASTASIFSVFILCI). An intrachain disulfide couples C100 to C180. Residues D107 and T112 each coordinate histamine. Residues 107–112 (DYVAST) form an important for agonist binding region. Over 124-144 (DRYRSVQQPLRYLKYRTKTRA) the chain is Cytoplasmic. Phosphothreonine occurs at positions 140 and 142. The chain crosses the membrane as a helical span at residues 145–164 (SATILGAWFLSFLWVIPILG). The Extracellular portion of the chain corresponds to 165 to 188 (WNHFRQQISVRREDKCETDFYDVT). The chain crosses the membrane as a helical span at residues 189–211 (WFKVMTAIINFYLPTLLMLWFYA). Histamine is bound at residue N198. Over 212 to 416 (KIYKAVQKHC…MNRERKAAKQ (205 aa)) the chain is Cytoplasmic. S230 carries the phosphoserine modification. Positions 238–261 (KLRPENPKGDAKKPGKESPWEVLK) are enriched in basic and acidic residues. Residues 238–286 (KLRPENPKGDAKKPGKESPWEVLKRKPKDAGGGSVLKSPSQTPKEMKSP) form a disordered region. T279 bears the Phosphothreonine mark. 2 positions are modified to phosphoserine: S344 and S347. The interval 345 to 379 (EISEDQMLGDSQSFSRTDSDTTTETAPGKGKLRSG) is disordered. Over residues 353 to 369 (GDSQSFSRTDSDTTTET) the composition is skewed to polar residues. Phosphoserine occurs at positions 380, 396, and 398. A helical membrane pass occupies residues 417–440 (LGFIMAAFILCWIPYFIFFMVIAF). Residues 424-428 (FILCW) form an important for agonist binding region. Y431 contributes to the histamine binding site. C441 and C444 are disulfide-bonded. Over 441 to 446 (CKNCCN) the chain is Extracellular. Residues 447–469 (EHLHMFTIWLGYINSTLNPLIYP) traverse the membrane as a helical segment. At 470–487 (LCNENFKKTFKRILHIRS) the chain is on the cytoplasmic side.

This sequence belongs to the G-protein coupled receptor 1 family. Phosphorylation at sites in the second and third cytoplasmic loops independently contribute to agonist-induced receptor down-regulation.

The protein resides in the cell membrane. G-protein-coupled receptor for histamine, a biogenic amine that functions as an immune modulator and a neurotransmitter. Through the H1 receptor, histamine mediates the contraction of smooth muscles and increases capillary permeability due to contraction of terminal venules. Also mediates neurotransmission in the central nervous system and thereby regulates circadian rhythms, emotional and locomotor activities as well as cognitive functions. The protein is Histamine H1 receptor of Pongo pygmaeus (Bornean orangutan).